Reading from the N-terminus, the 215-residue chain is LexA repressor (215 aa).

The segment at residues 28-48 (RAEIAAELGFSSPNAAEEHLR) is a DNA-binding region (H-T-H motif). Residues Ser133 and Lys170 each act as for autocatalytic cleavage activity in the active site.

Belongs to the peptidase S24 family. Homodimer.

It carries out the reaction Hydrolysis of Ala-|-Gly bond in repressor LexA.. Represses a number of genes involved in the response to DNA damage (SOS response), including recA and lexA. In the presence of single-stranded DNA, RecA interacts with LexA causing an autocatalytic cleavage which disrupts the DNA-binding part of LexA, leading to derepression of the SOS regulon and eventually DNA repair. The protein is LexA repressor of Burkholderia ambifaria (strain ATCC BAA-244 / DSM 16087 / CCUG 44356 / LMG 19182 / AMMD) (Burkholderia cepacia (strain AMMD)).